Reading from the N-terminus, the 105-residue chain is Sulfite reductase, dissimilatory-type subunit gamma (105 aa).

It belongs to the DsrC/TusE family. Heterohexamer of two alpha, two beta and two gamma subunits.

It is found in the cytoplasm. The enzyme catalyses [DsrC protein]-trisulfide + NAD(+) + 3 H2O = [DsrC protein]-dithiol + sulfite + NADH + 3 H(+). Catalyzes the reduction of sulfite to sulfide. This is the terminal oxidation reaction in sulfate respiration, a process catalyzed by the sulfate-reducing bacteria. The chain is Sulfite reductase, dissimilatory-type subunit gamma (dsvC) from Nitratidesulfovibrio vulgaris (strain ATCC 29579 / DSM 644 / CCUG 34227 / NCIMB 8303 / VKM B-1760 / Hildenborough) (Desulfovibrio vulgaris).